We begin with the raw amino-acid sequence, 41 residues long: Entericidin A (41 aa).

The first 18 residues, 1–18 (MMKRLIVLVLLASTLLTG), serve as a signal peptide directing secretion. Cys19 is lipidated: N-palmitoyl cysteine. A lipid anchor (S-diacylglycerol cysteine) is attached at Cys19.

The protein belongs to the EcnA/EcnB lipoprotein family.

The protein resides in the cell membrane. Functionally, acts as antidote to the effect of entericidin B. This Escherichia coli O157:H7 protein is Entericidin A (ecnA).